Consider the following 227-residue polypeptide: 2,3-bisphosphoglycerate-dependent phosphoglycerate mutase (227 aa).

Residues R7–N14, T20–G21, R59, E86–Y89, K97, R113–R114, and G182–N183 contribute to the substrate site. Catalysis depends on H8, which acts as the Tele-phosphohistidine intermediate. E86 (proton donor/acceptor) is an active-site residue.

The protein belongs to the phosphoglycerate mutase family. BPG-dependent PGAM subfamily. In terms of assembly, homodimer.

It carries out the reaction (2R)-2-phosphoglycerate = (2R)-3-phosphoglycerate. The protein operates within carbohydrate degradation; glycolysis; pyruvate from D-glyceraldehyde 3-phosphate: step 3/5. Its function is as follows. Catalyzes the interconversion of 2-phosphoglycerate and 3-phosphoglycerate. This is 2,3-bisphosphoglycerate-dependent phosphoglycerate mutase from Neisseria meningitidis serogroup C (strain 053442).